We begin with the raw amino-acid sequence, 282 residues long: Acetyl-coenzyme A carboxylase carboxyl transferase subunit beta (282 aa).

A CoA carboxyltransferase N-terminal domain is found at 26-282 (QWVKCPETGE…IIRLLNLLME (257 aa)).

This sequence belongs to the AccD/PCCB family. As to quaternary structure, acetyl-CoA carboxylase is a heterohexamer composed of biotin carboxyl carrier protein (AccB), biotin carboxylase (AccC) and two subunits each of ACCase subunit alpha (AccA) and ACCase subunit beta (AccD).

Its subcellular location is the cytoplasm. The catalysed reaction is N(6)-carboxybiotinyl-L-lysyl-[protein] + acetyl-CoA = N(6)-biotinyl-L-lysyl-[protein] + malonyl-CoA. The protein operates within lipid metabolism; malonyl-CoA biosynthesis; malonyl-CoA from acetyl-CoA: step 1/1. Its function is as follows. Component of the acetyl coenzyme A carboxylase (ACC) complex. Biotin carboxylase (BC) catalyzes the carboxylation of biotin on its carrier protein (BCCP) and then the CO(2) group is transferred by the transcarboxylase to acetyl-CoA to form malonyl-CoA. This Salinibacter ruber (strain DSM 13855 / M31) protein is Acetyl-coenzyme A carboxylase carboxyl transferase subunit beta.